A 287-amino-acid polypeptide reads, in one-letter code: UPF0354 protein SSP1020 (287 aa).

Belongs to the UPF0354 family.

This Staphylococcus saprophyticus subsp. saprophyticus (strain ATCC 15305 / DSM 20229 / NCIMB 8711 / NCTC 7292 / S-41) protein is UPF0354 protein SSP1020.